A 297-amino-acid polypeptide reads, in one-letter code: 4-diphosphocytidyl-2-C-methyl-D-erythritol kinase (297 aa).

Lys-6 is a catalytic residue. 94-104 (PVAGGMAGGSA) provides a ligand contact to ATP. The active site involves Asp-136.

Belongs to the GHMP kinase family. IspE subfamily.

The enzyme catalyses 4-CDP-2-C-methyl-D-erythritol + ATP = 4-CDP-2-C-methyl-D-erythritol 2-phosphate + ADP + H(+). It participates in isoprenoid biosynthesis; isopentenyl diphosphate biosynthesis via DXP pathway; isopentenyl diphosphate from 1-deoxy-D-xylulose 5-phosphate: step 3/6. In terms of biological role, catalyzes the phosphorylation of the position 2 hydroxy group of 4-diphosphocytidyl-2C-methyl-D-erythritol. This Nocardioides sp. (strain ATCC BAA-499 / JS614) protein is 4-diphosphocytidyl-2-C-methyl-D-erythritol kinase.